The chain runs to 142 residues: Transcriptional regulator MraZ (142 aa).

SpoVT-AbrB domains lie at 5–51 (ASSL…PRTE) and 77–120 (AMDV…DKAT).

The protein belongs to the MraZ family. In terms of assembly, forms oligomers.

It localises to the cytoplasm. The protein resides in the nucleoid. In Delftia acidovorans (strain DSM 14801 / SPH-1), this protein is Transcriptional regulator MraZ.